The following is a 388-amino-acid chain: Dual-specificity RNA methyltransferase RlmN (388 aa).

Catalysis depends on Glu109, which acts as the Proton acceptor. A Radical SAM core domain is found at 115–354; the sequence is EEDRATLCVS…TIVRKTRGDD (240 aa). Cys122 and Cys359 form a disulfide bridge. [4Fe-4S] cluster is bound by residues Cys129, Cys133, and Cys136. S-adenosyl-L-methionine contacts are provided by residues 183 to 184, Ser215, 237 to 239, and Asn316; these read GE and SLH. Cys359 functions as the S-methylcysteine intermediate in the catalytic mechanism.

Belongs to the radical SAM superfamily. RlmN family. [4Fe-4S] cluster serves as cofactor.

Its subcellular location is the cytoplasm. The enzyme catalyses adenosine(2503) in 23S rRNA + 2 reduced [2Fe-2S]-[ferredoxin] + 2 S-adenosyl-L-methionine = 2-methyladenosine(2503) in 23S rRNA + 5'-deoxyadenosine + L-methionine + 2 oxidized [2Fe-2S]-[ferredoxin] + S-adenosyl-L-homocysteine. It catalyses the reaction adenosine(37) in tRNA + 2 reduced [2Fe-2S]-[ferredoxin] + 2 S-adenosyl-L-methionine = 2-methyladenosine(37) in tRNA + 5'-deoxyadenosine + L-methionine + 2 oxidized [2Fe-2S]-[ferredoxin] + S-adenosyl-L-homocysteine. Specifically methylates position 2 of adenine 2503 in 23S rRNA and position 2 of adenine 37 in tRNAs. m2A2503 modification seems to play a crucial role in the proofreading step occurring at the peptidyl transferase center and thus would serve to optimize ribosomal fidelity. In Enterobacter sp. (strain 638), this protein is Dual-specificity RNA methyltransferase RlmN.